The chain runs to 864 residues: Receptor like protein 24 (864 aa).

Positions 1 to 29 are cleaved as a signal peptide; sequence MKTVFKSLLLLHFLLLLLLCFVSPSSFFL. The Extracellular portion of the chain corresponds to 30–830; that stretch reads LKVPVGGLVA…EEKGEVINWK (801 aa). N-linked (GlcNAc...) asparagine glycosylation is found at Asn-61, Asn-73, Asn-94, and Asn-112. LRR repeat units follow at residues 100-125, 127-148, 156-182, 183-205, 207-229, 230-253, 254-277, 279-303, 305-326, 327-350, 351-376, 378-398, 399-423, 425-448, and 449-472; these read FHQL…FCNL, KLKL…DLMG, LGKL…LFEL, HSLR…KFGN, NKLE…TISN, LTRI…VQNL, TKLS…LFTF, SLST…STSS, LEIM…ISKL, INLK…LLSP, LKSL…SYIP, SMES…ILKH, LQNL…LWTL, QLSF…VFVN, and LSVR…PLSI. N-linked (GlcNAc...) asparagine glycosylation is found at Asn-176, Asn-194, Asn-229, and Asn-252. N-linked (GlcNAc...) asparagine glycosylation is present at Asn-298. The N-linked (GlcNAc...) asparagine glycan is linked to Asn-338. N-linked (GlcNAc...) asparagine glycans are attached at residues Asn-433 and Asn-448. The LRR 16; degenerate repeat unit spans residues 473–492; it reads IGFSAIHNSFTGEIPLSICN. Residues Asn-492 and Asn-505 are each glycosylated (N-linked (GlcNAc...) asparagine). 10 LRR repeats span residues 493-514, 515-538, 539-562, 564-585, 586-610, 613-637, 688-712, 713-735, 736-760, and 762-785; these read RTSL…PQCL, SNFM…FYTD, SSLK…LLNC, SLRF…WLKA, LPNL…HQGP, FPEL…FFVN, LTSY…IGLL, KALI…SFAN, LMNL…LGSL, and FLVY…QITG. Asn-561 carries N-linked (GlcNAc...) asparagine glycosylation. Residue Asn-719 is glycosylated (N-linked (GlcNAc...) asparagine). The chain crosses the membrane as a helical span at residues 831–851; that stretch reads AVAIGYAPGLLFGLAIAHLIA. At 852–864 the chain is on the cytoplasmic side; the sequence is SYKPEWLVKIIGF.

This sequence belongs to the RLP family.

The protein resides in the cell membrane. This is Receptor like protein 24 from Arabidopsis thaliana (Mouse-ear cress).